The primary structure comprises 208 residues: Methyl-CpG-binding domain protein 3-like 2 (208 aa).

The tract at residues 1–89 (MGEPAFTSFP…HLEKPQQLCA (89 aa)) is interacts with MBD3.

The protein belongs to the MBD3L family. In terms of assembly, interacts (via N-terminus) with MBD3; the interaction is direct. Interacts with MTA1. Interacts with HDAC1. Interacts with HDAC2. Interacts with RBBP4. Interacts with RBBP7. As to expression, detected at low levels in several somatic tissues. Highly expressed in the ovarian teratocarcinoma cell line PA-1.

The protein localises to the nucleus. Its function is as follows. May displace the NuRD complex from chromatin. The sequence is that of Methyl-CpG-binding domain protein 3-like 2 (MBD3L2) from Homo sapiens (Human).